A 243-amino-acid chain; its full sequence is UPF0758 protein MAE_44350 (243 aa).

An MPN domain is found at 113–235 (VIDSPDTAAA…FQSLRQITDL (123 aa)). Residues His184, His186, and Asp197 each contribute to the Zn(2+) site. Positions 184 to 197 (HNHPTGSLVPSQDD) match the JAMM motif motif.

This sequence belongs to the UPF0758 family.

The polypeptide is UPF0758 protein MAE_44350 (Microcystis aeruginosa (strain NIES-843 / IAM M-2473)).